The following is a 784-amino-acid chain: MPHTLWMVWVLGVIISLSKEESSNQASLSCDHNGICKGSSGSLNSIPSGLTEAVKSLDLSNNRITYISNSDLQRYVNLQALVLTSNGINTIEEDSFSSLGRLEHLDLSYNYLSNLSSSWFKPLSSLKFLNLLGNPYKTLGETSLFSHLTKLRILRVGNMDTFTKIQRKDFAGLTFLEELEIDASDLQSYEPKSLKSIQNVSHLILHMKQHILLLEIFVDLTSSVECLELRDTDLDTFHFSELSTGETNSLIKKFTFRNVKITDESLFQVMKLLSQISGLLELEFDDCTLNGVGDFRGSDNDRVIDPGKVETVTIRRLHIPQFYSFNDLSTLYPLTERVKRITVENSKVFLVPCLLSRHLKSLEYLDLSENLMVEEYLKNSACEDAWPSLQTLILRQNHLASLGKTGETLLTLKNLTNLDISKNTFHYMPETCQWPEKMKYLNLSSTRIHSVTGCIPKTLEILDISNNNLNLFSLNLPQLKELYISRNKLMTLPDASLLPMLLVLKISRNTITTFSKEQLDSFHTLKTLEAGGNNFICSCEFLSFTQEQQALAKVLVDWPANYLCDSPSHVRGQRVQDVRLSVSECHRAALVSGMCCALFLLILLMGVLCHRFHGLWYMKMMWAWLQAKRKPRKAPNRDICYDAFVSYSERDAYWVENLMVQELENFNPPFKLCLHKRDFIPGKWIIDNIIDSIEKSHKTVFVLSENFVKSEWCKYELDFSHFRLFDENNDAAILVLLEPIEKKAIPQRFCKLRKIMNTKTYLEWPMDEARQEGFWVNLRAAIKS.

The first 18 residues, 1–18 (MPHTLWMVWVLGVIISLS), serve as a signal peptide directing secretion. Residues 19–587 (KEESSNQASL…VRLSVSECHR (569 aa)) are Extracellular-facing. Cys-30 and Cys-36 are joined by a disulfide. 19 LRR repeats span residues 54–77 (VKSLDLSNNRITYISNSDLQRYVN), 78–101 (LQALVLTSNGINTIEEDSFSSLGR), 102–125 (LEHLDLSYNYLSNLSSSWFKPLSS), 126–150 (LKFLNLLGNPYKTLGETSLFSHLTK), 151–175 (LRILRVGNMDTFTKIQRKDFAGLTF), 176–199 (LEELEIDASDLQSYEPKSLKSIQN), 200–223 (VSHLILHMKQHILLLEIFVDLTSS), 224–250 (VECLELRDTDLDTFHFSELSTGETNSL), 251–278 (IKKFTFRNVKITDESLFQVMKLLSQISG), 279–308 (LLELEFDDCTLNGVGDFRGSDNDRVIDPGK), 309–337 (VETVTIRRLHIPQFYSFNDLSTLYPLTER), 338–361 (VKRITVENSKVFLVPCLLSRHLKS), 362–388 (LEYLDLSENLMVEEYLKNSACEDAWPS), 389–414 (LQTLILRQNHLASLGKTGETLLTLKN), 415–437 (LTNLDISKNTFHYMPETCQWPEK), 438–457 (MKYLNLSSTRIHSVTGCIPK), 458–478 (TLEILDISNNNLNLFSLNLPQ), 479–500 (LKELYISRNKLMTLPDASLLPM), and 501–524 (LLVLKISRNTITTFSKEQLDSFHT). N-linked (GlcNAc...) asparagine glycosylation occurs at Asn-114. Asn-199 is a glycosylation site (N-linked (GlcNAc...) asparagine). Cys-353 and Cys-382 are disulfide-bonded. Asn-414 is a glycosylation site (N-linked (GlcNAc...) asparagine). A disulfide bridge connects residues Cys-432 and Cys-454. An N-linked (GlcNAc...) asparagine glycan is attached at Asn-442. Residues 525-579 (LKTLEAGGNNFICSCEFLSFTQEQQALAKVLVDWPANYLCDSPSHVRGQRVQDVR) form the LRRCT domain. A helical transmembrane segment spans residues 588–608 (AALVSGMCCALFLLILLMGVL). The Cytoplasmic portion of the chain corresponds to 609–784 (CHRFHGLWYM…WVNLRAAIKS (176 aa)). Residues 639–782 (ICYDAFVSYS…GFWVNLRAAI (144 aa)) form the TIR domain. Residue Lys-754 forms a Glycyl lysine isopeptide (Lys-Gly) (interchain with G-Cter in ubiquitin) linkage. The ATG16L1-binding motif signature appears at 761 to 778 (YLEWPMDEARQEGFWVNL).

This sequence belongs to the Toll-like receptor family. As to quaternary structure, interacts with LY96, TLR1 and TLR6 (via extracellular domain). TLR2 seems to exist in heterodimers with either TLR1 or TLR6 before stimulation by the ligand. The heterodimers form bigger oligomers in response to their corresponding ligands as well as further heterotypic associations with other receptors such as CD14 and/or CD36. Binds MYD88 (via TIR domain). Interacts with TICAM1. Interacts with CNPY3. Interacts with ATG16L1. Interacts with PPP1R11. Interacts with TICAM2. Interacts with TIRAP. Ubiquitinated at Lys-754 by PPP1R11, leading to its degradation. Deubiquitinated by USP2. Post-translationally, glycosylation of Asn-442 is critical for secretion of the N-terminal ectodomain of TLR2.

The protein resides in the membrane. It localises to the cytoplasmic vesicle. The protein localises to the phagosome membrane. Its subcellular location is the membrane raft. Functionally, cooperates with LY96 to mediate the innate immune response to bacterial lipoproteins and other microbial cell wall components. Cooperates with TLR1 or TLR6 to mediate the innate immune response to bacterial lipoproteins or lipopeptides. Acts via MYD88 and TRAF6, leading to NF-kappa-B activation, cytokine secretion and the inflammatory response. May also promote apoptosis in response to lipoproteins. Forms activation clusters composed of several receptors depending on the ligand, these clusters trigger signaling from the cell surface and subsequently are targeted to the Golgi in a lipid-raft dependent pathway. Forms the cluster TLR2:TLR6:CD14:CD36 in response to diacylated lipopeptides and TLR2:TLR1:CD14 in response to triacylated lipopeptides. The protein is Toll-like receptor 2 (TLR2) of Macaca fascicularis (Crab-eating macaque).